Consider the following 521-residue polypeptide: DEAD-box ATP-dependent RNA helicase 1 (521 aa).

Residues 1 to 20 (MVVAMATKEEEGGPSSRVPH) are disordered. The Q motif motif lies at 36 to 65 (CPVAHLPRLDPRLVKPLQRMGIESFFPVQV). The Helicase ATP-binding domain occupies 72–302 (IGPGAFERDI…QLELQHPLLL (231 aa)). Residue 85–92 (SPTGSGKT) participates in ATP binding. A DEAD box motif is present at residues 213–216 (DETD). Residues 330-480 (SLIVLLQELR…SLPEESVETL (151 aa)) form the Helicase C-terminal domain. Over residues 495–507 (LESEATKKSKSGD) the composition is skewed to basic and acidic residues. Residues 495–521 (LESEATKKSKSGDKAPNASKRKRTINT) are disordered.

The protein belongs to the DEAD box helicase family. DDX51/DBP6 subfamily.

The catalysed reaction is ATP + H2O = ADP + phosphate + H(+). The chain is DEAD-box ATP-dependent RNA helicase 1 from Oryza sativa subsp. japonica (Rice).